We begin with the raw amino-acid sequence, 516 residues long: L-amino acid oxidase bordonein-L (516 aa).

The N-terminal stretch at 1 to 18 (MNVFFMFSLLFLAALGSC) is a signal peptide. Cysteines 28 and 189 form a disulfide. Residues 61–62 (MA), 81–82 (EA), R89, and 103–106 (GPMR) each bind FAD. R106 and H239 together coordinate substrate. An FAD-binding site is contributed by V279. A disulfide bridge links C349 with C430. An N-linked (GlcNAc...) asparagine glycan is attached at N379. Position 390 (Y390) interacts with substrate. FAD is bound by residues E475 and 482–487 (GWIDST). 482–483 (GW) is a substrate binding site.

As to quaternary structure, homodimer; non-covalently linked. FAD is required as a cofactor. Post-translationally, N-glycosylated. N-glycan probably consists of the disaccharide N-acetylglucosamine-fucose (HexNAc-Fuc). As to expression, expressed by the venom gland.

It is found in the secreted. The enzyme catalyses an L-alpha-amino acid + O2 + H2O = a 2-oxocarboxylate + H2O2 + NH4(+). The catalysed reaction is L-leucine + O2 + H2O = 4-methyl-2-oxopentanoate + H2O2 + NH4(+). It catalyses the reaction L-phenylalanine + O2 + H2O = 3-phenylpyruvate + H2O2 + NH4(+). It carries out the reaction L-tryptophan + O2 + H2O = indole-3-pyruvate + H2O2 + NH4(+). The enzyme catalyses L-methionine + O2 + H2O = 4-methylsulfanyl-2-oxobutanoate + H2O2 + NH4(+). The catalysed reaction is L-isoleucine + O2 + H2O = (S)-3-methyl-2-oxopentanoate + H2O2 + NH4(+). It catalyses the reaction L-arginine + O2 + H2O = 5-guanidino-2-oxopentanoate + H2O2 + NH4(+). It carries out the reaction L-histidine + O2 + H2O = 3-(imidazol-5-yl)pyruvate + H2O2 + NH4(+). In terms of biological role, catalyzes an oxidative deamination of predominantly hydrophobic and aromatic L-amino acids, thus producing hydrogen peroxide that may contribute to the diverse toxic effects of this enzyme. Is highly active on L-Met, L-Leu, L-Trp, and L-Phe, moderately active on L-Ile, L-His, and L-Arg, and weakly or not active on L-Gln, L-Val, L-Asn, L-Ala, L-Lys, L-Ser, L-Thr, L-Pro, L-Asp, L-Gly, L-Tyr, L-Cys and L-Glu. This enzyme exhibits diverse biological activities, such as hemorrhage, hemolysis, edema, apoptosis of vascular endothelial cells or tumor cell lines, antibacterial and antiparasitic activities, as well as regulation of platelet aggregation. Its effect on platelets is controversial, since it either induces aggregation or inhibits agonist-induced aggregation. These different effects are probably due to different experimental conditions. In vitro, the enzyme exhibits cytotoxicity against fibroblast cell line and kills Leishmania amazonensis promastigotes, intensified by substrate addition. The protein is L-amino acid oxidase bordonein-L of Crotalus durissus terrificus (South American rattlesnake).